Reading from the N-terminus, the 793-residue chain is MLISGSSAALCALALPFAAAKSLWSDSPGNYSSFITTAFPLGNGRLGAMPIGSYDKEIVNLNVDSLWRGGPFESPTYSGGNPNVSKAGALPGIREWIFQNGTGNVSALLGEYPYYGSYQVLANLTIDMGELSDIDGYRRNLDLDSAVYSDHFSTGETYIEREAFCSYPDNVCVYRLSSNSSLPEITFGLENQLTSPAPNVSCHGNSISLYGQTYPVIGMIYNARVTVVVPGSSNTTDLCSSSTVKVPEGEKEVFLVFAADTNYEASNGNSKASFSFKGENPYMKVLQTATNAAKKSYSALKSSHVKDYQGVFNKFTLTLPDPNGSADRPTTELLSSYSQPGDPYVENLLFDYGRYLFISSSRPGSLPPNLQGLWTESYSPAWSGDYHANINLQMNHWAVDQTGLGELTEPLWTYMAETWMPRGAETAELLYGTSEGWVTHDEMNTFGHTAMKDVAQWADYPATNAWMSHHVWDHFDYSQDSAWYRETGYPILKGAAQFWLSQLVKDEYFKDGTLVVNPCNSPEHGPTLTPQTFGCTHYQQLIWELFDHVLQGWTASGDDDTSFKNAITSKFSTLDPGIHIGSWGQIQEWKLDIDVKNDTHRHLSNLYGWYPGYIISSVHGSNKTITDAVETTLYSRGTGVEDSNTGWAKVWRSACWALLNVTDEAYSELSLAIQDNFAENGFDMYSGSPPFQIDANFGLVGAMVQMLIRDSDRSSADASAGKTQDVLLGPAIPAAWGGGSVGGLRLRGGGVVSFSWNDSGVVDSCKADLSARGSDVSQVKFYVAGGRAIDCSS.

The first 20 residues, 1–20 (MLISGSSAALCALALPFAAA), serve as a signal peptide directing secretion. N-linked (GlcNAc...) asparagine glycosylation is found at N30, N83, N100, N104, N123, N179, N199, N234, N323, N597, N622, N660, and N757.

It belongs to the glycosyl hydrolase 95 family.

The protein resides in the secreted. The catalysed reaction is an alpha-L-fucoside + H2O = L-fucose + an alcohol. Its function is as follows. Alpha-fucosidase involved in degradation of fucosylated xyloglucans. Hydrolyzes alpha-1,2-linked fucose. This chain is Probable alpha-fucosidase A (afcA), found in Aspergillus niger (strain ATCC MYA-4892 / CBS 513.88 / FGSC A1513).